We begin with the raw amino-acid sequence, 385 residues long: Multidrug export protein AcrE (385 aa).

The first 23 residues, 1–23, serve as a signal peptide directing secretion; it reads MTKHARFFLLPSFILISAALIAG. A lipid anchor (N-palmitoyl cysteine) is attached at Cys24. The S-diacylglycerol cysteine moiety is linked to residue Cys24. Residues 366–385 are disordered; it reads ARPGEQVKATTDTPADTASK. Residues 373 to 385 show a composition bias toward polar residues; sequence KATTDTPADTASK.

It belongs to the membrane fusion protein (MFP) (TC 8.A.1) family. As to quaternary structure, part of the tripartite efflux system AcrEF-TolC, which is composed of an inner membrane transporter, AcrF, a periplasmic membrane fusion protein, AcrE, and an outer membrane component, TolC. The complex forms a large protein conduit and can translocate molecules across both the inner and outer membranes.

The protein localises to the cell inner membrane. In terms of biological role, part of the tripartite efflux system AcrEF-TolC. Involved in the efflux of indole and organic solvents. The polypeptide is Multidrug export protein AcrE (acrE) (Escherichia coli (strain K12)).